We begin with the raw amino-acid sequence, 122 residues long: Big defensin (122 aa).

A signal peptide spans 1–28 (MTRPSLVRCYSLFFTALIVMAIICPAWS). Positions 29–34 (EEIPKS) are excised as a propeptide. Cystine bridges form between C88–C119, C95–C114, and C99–C120.

Belongs to the big defensin family. In terms of tissue distribution, expressed in hemocytes.

Its subcellular location is the secreted. In terms of biological role, significantly inhibits the growth of Gram-negative and Gram-positive bacteria and fungi in vitro. The protein is Big defensin of Argopecten irradians (Bay scallop).